Consider the following 826-residue polypeptide: Outer membrane usher protein YehB (826 aa).

The first 22 residues, 1–22 (MLRMTPLASAIVALLLGIEAYA), serve as a signal peptide directing secretion. A disulfide bridge links cysteine 809 with cysteine 825.

This sequence belongs to the fimbrial export usher family.

It is found in the cell outer membrane. Functionally, part of the yehABCD fimbrial operon. Could contribute to adhesion to various surfaces in specific environmental niches. Probably involved in the export and assembly of fimbrial subunits across the outer membrane. The sequence is that of Outer membrane usher protein YehB (yehB) from Escherichia coli (strain K12).